We begin with the raw amino-acid sequence, 393 residues long: Pyrimidine monooxygenase RutA (393 aa).

FMN is bound by residues 79 to 80 (IK), Asn145, Glu154, 170 to 171 (RY), and Ser220.

Belongs to the NtaA/SnaA/DszA monooxygenase family. RutA subfamily.

The enzyme catalyses uracil + FMNH2 + NADH + O2 = (Z)-3-ureidoacrylate + FMN + NAD(+) + H2O + H(+). It carries out the reaction thymine + FMNH2 + NADH + O2 = (Z)-2-methylureidoacrylate + FMN + NAD(+) + H2O + H(+). Catalyzes the pyrimidine ring opening between N-3 and C-4 by an unusual flavin hydroperoxide-catalyzed mechanism, adding oxygen atoms in the process to yield ureidoacrylate peracid, that immediately reacts with FMN forming ureidoacrylate and FMN-N(5)-oxide. The FMN-N(5)-oxide reacts spontaneously with NADH to produce FMN. Requires the flavin reductase RutF to regenerate FMN in vivo. The chain is Pyrimidine monooxygenase RutA from Escherichia coli O139:H28 (strain E24377A / ETEC).